Consider the following 289-residue polypeptide: Shikimate dehydrogenase (NADP(+)) (289 aa).

Residues 22–24 and T69 each bind shikimate; that span reads SRS. The active-site Proton acceptor is K73. Residue E85 coordinates NADP(+). 2 residues coordinate shikimate: N94 and D109. NADP(+) is bound by residues 134 to 138, 158 to 163, and I226; these read GAGGA and NRTLSR. Y228 provides a ligand contact to shikimate. G249 serves as a coordination point for NADP(+).

It belongs to the shikimate dehydrogenase family. Homodimer.

The enzyme catalyses shikimate + NADP(+) = 3-dehydroshikimate + NADPH + H(+). The protein operates within metabolic intermediate biosynthesis; chorismate biosynthesis; chorismate from D-erythrose 4-phosphate and phosphoenolpyruvate: step 4/7. Functionally, involved in the biosynthesis of the chorismate, which leads to the biosynthesis of aromatic amino acids. Catalyzes the reversible NADPH linked reduction of 3-dehydroshikimate (DHSA) to yield shikimate (SA). In Brucella abortus (strain S19), this protein is Shikimate dehydrogenase (NADP(+)).